We begin with the raw amino-acid sequence, 961 residues long: MPKRAADEPGTSTTDPFHEQSPFDAVLAGTETTDTICEEPPAKRIDLDIKQEFNGGVQSGGLIKNESELTQMTIKQETEGNINEARREEEDEEQDEDSRTSMPPALGEDDDYEEDDADSFIDKTNTPPPSQSFLEGCRAANLPNDIVTGAWETYNHAVQRVSLEGSESAWQLSAIYYYLLSKGIKRRGKTIRILIQPFPVSILTIANSFDISVAEMLDKTARFVEIIHSRKIRRYQEYIRRIQEGLAVSCVIFKKFCRIFCKIFEEIKVGSENCPSSHELFTVLWTSFLVMKSRMTVDDLISNYQLLFSILDQVYTEMCSMKEGIVHHLNQKFVEDLLENDCTIIRALCTQFGGSVLDARHFSDHTFKKMEKTGIPSTWNFQEFRDLIMNVPKTAYENYLLQRGSIDERIFIPSVEDFSKIFQSPDTYSVADILKVSYSGRRFRDAEFLTKISNNHCLEKLALGGKVASEKLVTQSKEQPRVPCVEYNLELGNYPDDLESNNQSLYNRLTKIIGSWKLENSKLEEVCGTMSDSPMATILLKSDEMTNKFERTLSAELGETINENIPKYHYNVRKELELVFLIFMEKIIVAELKKKVREEDLLNVIRREEFLDSVFCFCVELILVSNGYDRPFPWSAELCGVHPFMFHKVIDLMITHEKQLSRQMVQHFSRIEETVIEYFSWKSDSPLWPMVVRCPFAHFQEFGEDWADKLNSYSPIKFTPIKKPDDLRDELGRPIVPQNQTSRTLRIFLKRTYFTAARRLQDLTDRVSMGARAKSQCWSLFDYLLRNDTLIFMDRHLDQILLCCVFVIMKINESSMLFTEIMAQYRRQSANSLLVYRSVTVFQEQLNPENPQAVNTKETILERLEGPQKEKTTVDIIKYYNIEFRDRIKYIIGQIDSASDEDLMEMPVATESGLMPVRVYLTHKLSIQTLPKTKHGESKQERAIANLEKSGITIAMERSGD.

Disordered regions lie at residues 1 to 43 (MPKR…PPAK) and 55 to 129 (GGVQ…TPPP). Residues 68 to 81 (ELTQMTIKQETEGN) are compositionally biased toward polar residues. Acidic residues predominate over residues 107–119 (GEDDDYEEDDADS). Ser714 carries the phosphoserine; by CDK4 modification. Thr719 carries the post-translational modification Phosphothreonine; by CDK4.

This sequence belongs to the retinoblastoma protein (RB) family. Component of the DRM complex, at least composed of lin-9, lin-35, lin-37, lin-52, lin-53, lin-54, dpl-1 and efl-1. Interacts with lin-53. Interacts (via C-terminus) with dpl-1 (via C-terminus) and efl-1 (via C-terminus). Interacts (via C-terminus) with lin-8. Post-translationally, phosphorylated by the cyclin dependent kinase cdk-4. Phosphorylation inhibits the transcriptional repressor activity of lin-35 and allows for progression through the G1 phase of the cell cycle during postembryonic development.

It localises to the nucleus. Functionally, key regulator of cell division which acts as a transcriptional repressor and negatively regulates cell cycle progression in its active unphosphorylated form, but allows cell cycle progression when phosphorylated. When unphosphorylated and in its active form, interacts with E2F transcription factors such as efl-1 to repress their transcriptional activity and negatively regulate the progression through the G1 phase of the cell cycle during postembryonic development. May furthermore act with cell cycle regulator cki-1 to negatively regulate cell cycle progression. Acts redundantly with lin-53, fzr-1 and lin-23 to control cell cycle progression by regulating the expression of G1 phase cyclins. In particular, negatively regulates the expression of the cyclin E homolog cye-1, which is essential for the G1/S phase transition. Regulates cell division in the intestinal lineage, repressing the expression of genes such as cdc-25.2, which are required for intestinal cells to transition from the karyokinesis cell cycle (also known as nuclear division) to endoreplication, a specific growth pathway in the intestinal epithelium required for feeding and gut development in growing larvae during the L1 stage molt. Its role as a transcriptional repressor in the regulation of intestinal cell division during postembryonic development is most likely in complex with an E2F cell cycle regulatory transcription factor efl-1 and its binding partner the synthetic multivulva class B protein dpl-1. Synthetic multivulva (synMuv) class B protein. SynMuv proteins are required to repress the induction of vulval development by Ras signaling and probably act by forming the multiprotein DRM complex that represses transcription. Together with synMuv class B protein lin-53, and redundantly with synMuv class A protein lin-15A, represses transcription to control vulval development, most likely through antagonization of the Ras-signaling pathway in the major hypodermal syncytium hyp7. Acts redundantly with the transcriptional corepressor spr-1 and the zinc finger protein zfp-2 to play a role in vulval morphogenesis, promote germline proliferation and somatic gonad development. Acts redundantly with ubc-18 in the regulation of pharyngeal morphogenesis during embryonic development by negatively regulating the expression of proteins such as sup-35. Functions with the SWI/SNF complex and proteins such as pha-1 to regulate larval development. Functions redundantly with xnp-1 to regulate somatic gonad development. Acts redundantly with slr-2 to regulate the expression of intestinal genes required for nutrient utilization. Regulates transcription in response to starvation. Furthermore, in response to starvation, promotes germ cell programmed cell death by negatively regulating the expression of the anti-apoptotic protein ced-9. Conversely, in conjunction with mcd-1, efl-1 and the synthetic multivulva class B proteins dpl-1, lin-37 and lin-52, may also regulate transcription to promote programmed cell death independently of ced-1, ced-8 and ced-9 cell death pathways. Directly involved in heterochromatin formation by maintaining overall chromatin structure and, in particular, that of constitutive heterochromatin by stabilizing histone methylation. In particular, negatively regulates the expression of mes-4, a histone methyltransferase that controls the expression of germline specific genes. May play a role in double strand break formation during meiosis. May suppress sensitivity to RNAi. May play a role in the response to endoplasmic reticulum (ER) stress. The chain is Retinoblastoma-like protein homolog lin-35 from Caenorhabditis elegans.